Here is a 168-residue protein sequence, read N- to C-terminus: Large ribosomal subunit protein uL10 (168 aa).

Belongs to the universal ribosomal protein uL10 family. Part of the ribosomal stalk of the 50S ribosomal subunit. The N-terminus interacts with L11 and the large rRNA to form the base of the stalk. The C-terminus forms an elongated spine to which L12 dimers bind in a sequential fashion forming a multimeric L10(L12)X complex.

In terms of biological role, forms part of the ribosomal stalk, playing a central role in the interaction of the ribosome with GTP-bound translation factors. This is Large ribosomal subunit protein uL10 from Clostridioides difficile (strain 630) (Peptoclostridium difficile).